Reading from the N-terminus, the 476-residue chain is MKILFAASEIYPLIKTGGLADVAGALPVALRKKGHDVKLIMPAYQGILEKVAPIQKSINLGNPFGVGDLLLLETHIPENDTPIWLLQCQALYEREDGPYVDKNGIDFEDNHIRFAALSWATATLALHGHLMNWQADILHLNDWQTGFAAAYLESWKVEHIPVVTTVHNLRYNGSFDMNQFSAMHLSPELLNMHGMEFYGRFSGLKAGLVYANAVTTVSPTYAKEILTPEYGDGLDGALRAMQDRLVGILNGVDYNQWSPEKDTLIPHNYDIDTLSQKQANKLALLQENGLSEDLNQPVFGVVSRLTEQKGLDLVLQVMPALLEKGARLVVLGSGDKYLESQYLELQNNYPNQVSVRIGYFEDYSHRLQAGIDALLIPSRFEPCGLTQLYALKYGTLPIVRQTGGLADTVFEDGERANGFVFKEASAKALQAAMERSIECFHDTNRWQEKQKNAMCYDYSWDAVTDQWISLYESLIN.

Residue Lys-15 participates in ADP-alpha-D-glucose binding.

The protein belongs to the glycosyltransferase 1 family. Bacterial/plant glycogen synthase subfamily.

The enzyme catalyses [(1-&gt;4)-alpha-D-glucosyl](n) + ADP-alpha-D-glucose = [(1-&gt;4)-alpha-D-glucosyl](n+1) + ADP + H(+). It participates in glycan biosynthesis; glycogen biosynthesis. Synthesizes alpha-1,4-glucan chains using ADP-glucose. The polypeptide is Glycogen synthase (Marinomonas sp. (strain MWYL1)).